Reading from the N-terminus, the 377-residue chain is N5-carboxyaminoimidazole ribonucleotide synthase (377 aa).

Residues Arg-93, Lys-133, 138–144 (GYDGKGQ), 175–178 (EEFV), Glu-183, His-206, and 257–258 (NE) each bind ATP. In terms of domain architecture, ATP-grasp spans 97 to 287 (KALLDRAQVA…QFENHLRAVC (191 aa)).

It belongs to the PurK/PurT family. In terms of assembly, homodimer.

It carries out the reaction 5-amino-1-(5-phospho-beta-D-ribosyl)imidazole + hydrogencarbonate + ATP = 5-carboxyamino-1-(5-phospho-D-ribosyl)imidazole + ADP + phosphate + 2 H(+). It functions in the pathway purine metabolism; IMP biosynthesis via de novo pathway; 5-amino-1-(5-phospho-D-ribosyl)imidazole-4-carboxylate from 5-amino-1-(5-phospho-D-ribosyl)imidazole (N5-CAIR route): step 1/2. In terms of biological role, catalyzes the ATP-dependent conversion of 5-aminoimidazole ribonucleotide (AIR) and HCO(3)(-) to N5-carboxyaminoimidazole ribonucleotide (N5-CAIR). This is N5-carboxyaminoimidazole ribonucleotide synthase from Vibrio cholerae serotype O1 (strain ATCC 39315 / El Tor Inaba N16961).